Here is a 259-residue protein sequence, read N- to C-terminus: Deoxyribose-phosphate aldolase (259 aa).

Aspartate 102 (proton donor/acceptor) is an active-site residue. The Schiff-base intermediate with acetaldehyde role is filled by lysine 167. Lysine 201 functions as the Proton donor/acceptor in the catalytic mechanism.

This sequence belongs to the DeoC/FbaB aldolase family. DeoC type 2 subfamily.

Its subcellular location is the cytoplasm. The catalysed reaction is 2-deoxy-D-ribose 5-phosphate = D-glyceraldehyde 3-phosphate + acetaldehyde. It participates in carbohydrate degradation; 2-deoxy-D-ribose 1-phosphate degradation; D-glyceraldehyde 3-phosphate and acetaldehyde from 2-deoxy-alpha-D-ribose 1-phosphate: step 2/2. In terms of biological role, catalyzes a reversible aldol reaction between acetaldehyde and D-glyceraldehyde 3-phosphate to generate 2-deoxy-D-ribose 5-phosphate. The polypeptide is Deoxyribose-phosphate aldolase (Shigella flexneri).